A 298-amino-acid polypeptide reads, in one-letter code: Release factor glutamine methyltransferase (298 aa).

S-adenosyl-L-methionine-binding positions include 131–135 (GTGTG), D162, W189, and N205. Position 205–208 (205–208 (NPPY)) interacts with substrate.

The protein belongs to the protein N5-glutamine methyltransferase family. PrmC subfamily.

The catalysed reaction is L-glutaminyl-[peptide chain release factor] + S-adenosyl-L-methionine = N(5)-methyl-L-glutaminyl-[peptide chain release factor] + S-adenosyl-L-homocysteine + H(+). Methylates the class 1 translation termination release factors RF1/PrfA and RF2/PrfB on the glutamine residue of the universally conserved GGQ motif. The sequence is that of Release factor glutamine methyltransferase from Pasteurella multocida (strain Pm70).